We begin with the raw amino-acid sequence, 109 residues long: Phosphoribosyl-ATP pyrophosphatase (109 aa).

Belongs to the PRA-PH family.

It localises to the cytoplasm. The enzyme catalyses 1-(5-phospho-beta-D-ribosyl)-ATP + H2O = 1-(5-phospho-beta-D-ribosyl)-5'-AMP + diphosphate + H(+). Its pathway is amino-acid biosynthesis; L-histidine biosynthesis; L-histidine from 5-phospho-alpha-D-ribose 1-diphosphate: step 2/9. In Paramagnetospirillum magneticum (strain ATCC 700264 / AMB-1) (Magnetospirillum magneticum), this protein is Phosphoribosyl-ATP pyrophosphatase.